We begin with the raw amino-acid sequence, 97 residues long: Plastocyanin (97 aa).

The Plastocyanin-like domain maps to 1 to 97 (AEVKLGADDG…AGMKGEVTVT (97 aa)). Cu cation-binding residues include His-37, Cys-82, His-85, and Met-90.

This sequence belongs to the plastocyanin family. The cofactor is Cu(2+).

It is found in the plastid. Its subcellular location is the chloroplast thylakoid membrane. Participates in electron transfer between P700 and the cytochrome b6-f complex in photosystem I. The protein is Plastocyanin (PETE) of Daucus carota (Wild carrot).